Here is a 103-residue protein sequence, read N- to C-terminus: Small ribosomal subunit protein uS10 (103 aa).

The protein belongs to the universal ribosomal protein uS10 family. In terms of assembly, part of the 30S ribosomal subunit.

Its function is as follows. Involved in the binding of tRNA to the ribosomes. The protein is Small ribosomal subunit protein uS10 of Buchnera aphidicola subsp. Cinara cedri (strain Cc).